The following is a 241-amino-acid chain: Ribonuclease 3 (241 aa).

The region spanning 16 to 144 (HAEFEKKINY…VIGAIFQDGG (129 aa)) is the RNase III domain. Glutamate 57 lines the Mg(2+) pocket. Active-site residues include aspartate 61 and glutamate 133. Glutamate 133 serves as a coordination point for Mg(2+). Residues 171 to 240 (DAKSRLQEIL…AALAIKKIES (70 aa)) form the DRBM domain.

This sequence belongs to the ribonuclease III family. As to quaternary structure, homodimer. Mg(2+) serves as cofactor.

The protein localises to the cytoplasm. It carries out the reaction Endonucleolytic cleavage to 5'-phosphomonoester.. Functionally, digests double-stranded RNA. Involved in the processing of primary rRNA transcript to yield the immediate precursors to the large and small rRNAs (23S and 16S). Processes some mRNAs, and tRNAs when they are encoded in the rRNA operon. Processes pre-crRNA and tracrRNA of type II CRISPR loci if present in the organism. This is Ribonuclease 3 from Desulfotalea psychrophila (strain LSv54 / DSM 12343).